A 61-amino-acid chain; its full sequence is Defensin BmKDfsin1 (61 aa).

The N-terminal stretch at 1 to 25 (MKTIVLLFVLVLVFALLVKMGMVEA) is a signal peptide. 3 disulfide bridges follow: cysteine 29–cysteine 50, cysteine 36–cysteine 58, and cysteine 40–cysteine 60.

The protein belongs to the invertebrate defensin family. Type 2 subfamily. Highly expressed in non-venom gland (hemolymph) and moderately expressed in venom gland.

It is found in the secreted. Antibacterial peptide active against Gram-positive bacteria, but not on Gram-negative bacteria. Also has weak blocking activity on Kv1.1/KCNA1, Kv1.2/KCNA2, Kv1.3/KCNA3, KCa3.1/KCNN4/IK, KCa2.3/KCNN3/SK3 and Kv11.1/KCNH2/ERG1 channels (tested at 1 uM). It inhibits potassium channel current by interacting with the pore region. The sequence is that of Defensin BmKDfsin1 from Olivierus martensii (Manchurian scorpion).